The chain runs to 404 residues: Subtilisin-like proteinase Mp1 (404 aa).

Residues Met1–Ala19 form the signal peptide. A propeptide spanning residues Ala20–Tyr112 is cleaved from the precursor. The Inhibitor I9 domain maps to Ser33–Leu111. A Peptidase S8 domain is found at Pro121–Ala404. A glycan (N-linked (GlcNAc...) asparagine) is linked at Asn133. Residues Asp154, His186, and Ser347 each act as charge relay system in the active site.

It belongs to the peptidase S8 family.

Its subcellular location is the secreted. The chain is Subtilisin-like proteinase Mp1 from Magnaporthiopsis poae (Kentucky bluegrass fungus).